The following is a 382-amino-acid chain: Dual-specificity RNA methyltransferase RlmN (382 aa).

The Proton acceptor role is filled by Glu-91. A Radical SAM core domain is found at 97 to 339; sequence ETDRGTLCIS…TTVRKTRGDD (243 aa). Cys-104 and Cys-344 are disulfide-bonded. Cys-111, Cys-115, and Cys-118 together coordinate [4Fe-4S] cluster. Residues 165–166, Ser-197, 219–221, and Asn-301 each bind S-adenosyl-L-methionine; these read GE and SLH. The active-site S-methylcysteine intermediate is Cys-344.

Belongs to the radical SAM superfamily. RlmN family. It depends on [4Fe-4S] cluster as a cofactor.

Its subcellular location is the cytoplasm. It catalyses the reaction adenosine(2503) in 23S rRNA + 2 reduced [2Fe-2S]-[ferredoxin] + 2 S-adenosyl-L-methionine = 2-methyladenosine(2503) in 23S rRNA + 5'-deoxyadenosine + L-methionine + 2 oxidized [2Fe-2S]-[ferredoxin] + S-adenosyl-L-homocysteine. It carries out the reaction adenosine(37) in tRNA + 2 reduced [2Fe-2S]-[ferredoxin] + 2 S-adenosyl-L-methionine = 2-methyladenosine(37) in tRNA + 5'-deoxyadenosine + L-methionine + 2 oxidized [2Fe-2S]-[ferredoxin] + S-adenosyl-L-homocysteine. Functionally, specifically methylates position 2 of adenine 2503 in 23S rRNA and position 2 of adenine 37 in tRNAs. m2A2503 modification seems to play a crucial role in the proofreading step occurring at the peptidyl transferase center and thus would serve to optimize ribosomal fidelity. This is Dual-specificity RNA methyltransferase RlmN from Polaromonas sp. (strain JS666 / ATCC BAA-500).